The sequence spans 153 residues: Large ribosomal subunit protein uL22 (153 aa).

The protein belongs to the universal ribosomal protein uL22 family. Part of the 50S ribosomal subunit.

This protein binds specifically to 23S rRNA. It makes multiple contacts with different domains of the 23S rRNA in the assembled 50S subunit and ribosome. In terms of biological role, the globular domain of the protein is located near the polypeptide exit tunnel on the outside of the subunit, while an extended beta-hairpin is found that lines the wall of the exit tunnel in the center of the 70S ribosome. The protein is Large ribosomal subunit protein uL22 of Methanococcus maripaludis (strain DSM 14266 / JCM 13030 / NBRC 101832 / S2 / LL).